We begin with the raw amino-acid sequence, 191 residues long: Ribonuclease HII (191 aa).

Residues 16 to 191 enclose the RNase H type-2 domain; the sequence is INLIGIDEAG…KLHRKSFKLL (176 aa). The a divalent metal cation site is built by aspartate 22, glutamate 23, and aspartate 110.

The protein belongs to the RNase HII family. Mn(2+) is required as a cofactor. Mg(2+) serves as cofactor.

Its subcellular location is the cytoplasm. The catalysed reaction is Endonucleolytic cleavage to 5'-phosphomonoester.. Functionally, endonuclease that specifically degrades the RNA of RNA-DNA hybrids. This Campylobacter jejuni subsp. doylei (strain ATCC BAA-1458 / RM4099 / 269.97) protein is Ribonuclease HII.